A 259-amino-acid polypeptide reads, in one-letter code: Glutamate racemase (259 aa).

Substrate-binding positions include 7–8 (DS) and 39–40 (YG). Catalysis depends on Cys-70, which acts as the Proton donor/acceptor. Substrate is bound at residue 71–72 (NS). Cys-180 serves as the catalytic Proton donor/acceptor. 181–182 (TH) contributes to the substrate binding site.

Belongs to the aspartate/glutamate racemases family.

It carries out the reaction L-glutamate = D-glutamate. It participates in cell wall biogenesis; peptidoglycan biosynthesis. Provides the (R)-glutamate required for cell wall biosynthesis. This is Glutamate racemase from Hydrogenobaculum sp. (strain Y04AAS1).